A 422-amino-acid polypeptide reads, in one-letter code: Enolase (422 aa).

Residue Gln162 coordinates (2R)-2-phosphoglycerate. The Proton donor role is filled by Glu204. Mg(2+) is bound by residues Asp241, Glu284, and Asp311. (2R)-2-phosphoglycerate contacts are provided by Lys336, Arg365, Ser366, and Lys387. The active-site Proton acceptor is the Lys336.

It belongs to the enolase family. As to quaternary structure, component of the RNA degradosome, a multiprotein complex involved in RNA processing and mRNA degradation. Requires Mg(2+) as cofactor.

The protein resides in the cytoplasm. It localises to the secreted. Its subcellular location is the cell surface. The catalysed reaction is (2R)-2-phosphoglycerate = phosphoenolpyruvate + H2O. It participates in carbohydrate degradation; glycolysis; pyruvate from D-glyceraldehyde 3-phosphate: step 4/5. In terms of biological role, catalyzes the reversible conversion of 2-phosphoglycerate (2-PG) into phosphoenolpyruvate (PEP). It is essential for the degradation of carbohydrates via glycolysis. The polypeptide is Enolase (Legionella pneumophila (strain Lens)).